The chain runs to 148 residues: Lysozyme C (148 aa).

The signal sequence occupies residues M1–G18. The 130-residue stretch at K19–V148 folds into the C-type lysozyme domain. Cystine bridges form between C24–C146, C48–C134, C83–C99, and C95–C113. Catalysis depends on residues E53 and D71.

The protein belongs to the glycosyl hydrolase 22 family. Monomer.

It is found in the secreted. The enzyme catalyses Hydrolysis of (1-&gt;4)-beta-linkages between N-acetylmuramic acid and N-acetyl-D-glucosamine residues in a peptidoglycan and between N-acetyl-D-glucosamine residues in chitodextrins.. Its function is as follows. Lysozymes have primarily a bacteriolytic function; those in tissues and body fluids are associated with the monocyte-macrophage system and enhance the activity of immunoagents. Also plays a role in digestion in this species. This is Lysozyme C (LYZ) from Trachypithecus francoisi (Francois' leaf monkey).